Consider the following 389-residue polypeptide: MNIHEYQAKAVLAKYGVPVPSGHAAFTPEEAVAKAKELGGPVWVVKAQIHAGGRGKAGGVKVVKSLDDVKKEATRLIGSTLVTHQTGPDGKEVNRLYIEDGSSISRELYLSILVDRATSRVSFIVSTEGGMDIEEVAKKTPEKILSFSVDPASGISGFHGRKVAYALGLEGDQVKQGVALIEKLYKAFVTEDMSMLEINPLVVTGEGNLLCLDAKVNFDSNALYRHKDIVELRDLTEEDPAEVEASKYDLNYIKLDGKIGCMVNGAGLAMATMDIIKLYGSEPANFLDVGGGATKEKVTAAFKIILSDPSVEGILVNIFGGIMRCDIIAEGVIAAAKEVSLSVPLVVRLEGTNVDLGKKIMAESGLPIISADNLADAAEKIVKAVKEAA.

Positions 9-244 (KAVLAKYGVP…LTEEDPAEVE (236 aa)) constitute an ATP-grasp domain. Residues Lys46, 53–55 (GRG), Glu99, Ser102, and Glu107 each bind ATP. Positions 199 and 213 each coordinate Mg(2+). Substrate-binding positions include Asn264 and 321–323 (GIM).

This sequence belongs to the succinate/malate CoA ligase beta subunit family. As to quaternary structure, heterotetramer of two alpha and two beta subunits. Mg(2+) is required as a cofactor.

The enzyme catalyses succinate + ATP + CoA = succinyl-CoA + ADP + phosphate. It carries out the reaction GTP + succinate + CoA = succinyl-CoA + GDP + phosphate. It participates in carbohydrate metabolism; tricarboxylic acid cycle; succinate from succinyl-CoA (ligase route): step 1/1. Its function is as follows. Succinyl-CoA synthetase functions in the citric acid cycle (TCA), coupling the hydrolysis of succinyl-CoA to the synthesis of either ATP or GTP and thus represents the only step of substrate-level phosphorylation in the TCA. The beta subunit provides nucleotide specificity of the enzyme and binds the substrate succinate, while the binding sites for coenzyme A and phosphate are found in the alpha subunit. In Parvibaculum lavamentivorans (strain DS-1 / DSM 13023 / NCIMB 13966), this protein is Succinate--CoA ligase [ADP-forming] subunit beta.